The chain runs to 130 residues: D-ribose pyranase (130 aa).

The active-site Proton donor is the His20. Residues Asp28, His97, and 119–121 (YAN) contribute to the substrate site.

Belongs to the RbsD / FucU family. RbsD subfamily. Homodecamer.

The protein localises to the cytoplasm. It catalyses the reaction beta-D-ribopyranose = beta-D-ribofuranose. The protein operates within carbohydrate metabolism; D-ribose degradation; D-ribose 5-phosphate from beta-D-ribopyranose: step 1/2. In terms of biological role, catalyzes the interconversion of beta-pyran and beta-furan forms of D-ribose. This Bacillus pumilus (strain SAFR-032) protein is D-ribose pyranase.